A 185-amino-acid chain; its full sequence is Ribosome-recycling factor (185 aa).

Residues 136-161 (MDSLKTDEKKGEIGEDDRKRRETEVQ) form a disordered region.

This sequence belongs to the RRF family.

It localises to the cytoplasm. Its function is as follows. Responsible for the release of ribosomes from messenger RNA at the termination of protein biosynthesis. May increase the efficiency of translation by recycling ribosomes from one round of translation to another. This is Ribosome-recycling factor from Rhizorhabdus wittichii (strain DSM 6014 / CCUG 31198 / JCM 15750 / NBRC 105917 / EY 4224 / RW1) (Sphingomonas wittichii).